A 595-amino-acid polypeptide reads, in one-letter code: Probable carotenoid cleavage dioxygenase 4, chloroplastic (595 aa).

The transit peptide at 1 to 34 (MDSVSSSSFLSSTFSLHHSLLRRRSSSPTLLRIN) directs the protein to the chloroplast. The tract at residues 41–74 (RSPITNPSDNNDRRNKPKTLHNRTNHTLVSSPPK) is disordered. The segment covering 55–64 (NKPKTLHNRT) has biased composition (basic residues). Residues His287, His336, His404, and His583 each coordinate Fe cation.

This sequence belongs to the carotenoid oxygenase family. As to quaternary structure, interacts with VAR3. Interacts with PGM48. The cofactor is Fe(2+). As to expression, mostly expressed in flowers (e.g. sepals and petals), siliques, seeds, leaves and cotyledons.

It is found in the plastid. Its subcellular location is the chloroplast. The protein resides in the plastoglobule. In terms of biological role, may be involved in carotenoid cleavage. This chain is Probable carotenoid cleavage dioxygenase 4, chloroplastic (CCD4), found in Arabidopsis thaliana (Mouse-ear cress).